The sequence spans 268 residues: 14-3-3-like protein GF14 iota (268 aa).

Phosphoserine is present on residues Ser-70 and Ser-193. At Thr-214 the chain carries Phosphothreonine. The tract at residues 240-268 is disordered; it reads DLPEDGGEDNIKTEESKQEQAKPADATEN. The segment covering 248–261 has biased composition (basic and acidic residues); that stretch reads DNIKTEESKQEQAK.

This sequence belongs to the 14-3-3 family. As to expression, expressed in flowers.

The protein localises to the nucleus. It localises to the cytoplasm. Is associated with a DNA binding complex that binds to the G box, a well-characterized cis-acting DNA regulatory element found in plant genes. The polypeptide is 14-3-3-like protein GF14 iota (Arabidopsis thaliana (Mouse-ear cress)).